Consider the following 225-residue polypeptide: PKHD-type hydroxylase YbiX (225 aa).

Positions 78–177 (TLSTPLFNRY…RVASFMWIQS (100 aa)) constitute a Fe2OG dioxygenase domain. Residues H96, D98, and H158 each contribute to the Fe cation site. R168 serves as a coordination point for 2-oxoglutarate.

It depends on Fe(2+) as a cofactor. L-ascorbate serves as cofactor.

In Escherichia coli O81 (strain ED1a), this protein is PKHD-type hydroxylase YbiX.